A 145-amino-acid chain; its full sequence is Mannitol-specific phosphotransferase enzyme IIA component (145 aa).

A PTS EIIA type-2 domain is found at 4 to 144 (PILKKENIVL…EEILSILNEV (141 aa)). Catalysis depends on H64, which acts as the Tele-phosphohistidine intermediate. Position 64 is a phosphohistidine; by HPr (H64).

The protein resides in the cytoplasm. Functionally, the phosphoenolpyruvate-dependent sugar phosphotransferase system (sugar PTS), a major carbohydrate active transport system, catalyzes the phosphorylation of incoming sugar substrates concomitantly with their translocation across the cell membrane. The enzyme II CmtAB PTS system is involved in D-mannitol transport. The sequence is that of Mannitol-specific phosphotransferase enzyme IIA component from Geobacillus stearothermophilus (Bacillus stearothermophilus).